Here is a 472-residue protein sequence, read N- to C-terminus: Arabinose-proton symporter (472 aa).

Residues 1 to 29 (MVTINTESALTPRSLRDTRRMNMFVSVAA) lie on the Cytoplasmic side of the membrane. Residues 30 to 50 (AVAGLLFGLDIGVIAGALPFI) form a helical membrane-spanning segment. Residues 51–63 (TDHFVLTSRLQEW) are Periplasmic-facing. Residues 64–84 (VVSSMMLGAAIGALFNGWLSF) traverse the membrane as a helical segment. Residues 85 to 91 (RLGRKYS) are Cytoplasmic-facing. A helical transmembrane segment spans residues 92–112 (LMAGAILFVLGSIGSAFATSV). The Periplasmic segment spans residues 113 to 114 (EM). The chain crosses the membrane as a helical span at residues 115–135 (LIAARVVLGIAVGIASYTAPL). The Cytoplasmic portion of the chain corresponds to 136–154 (YLSEMASENVRGKMISMYQ). Residues 155 to 175 (LMVTLGIVLAFLSDTAFSYSG) form a helical membrane-spanning segment. The Periplasmic portion of the chain corresponds to 176–178 (NWR). Residues 179 to 199 (AMLGVLALPAVLLIILVVFLP) traverse the membrane as a helical segment. Over 200–257 (NSPRWLAEKGRHIEAEEVLRMLRDTSEKAREELNEIRESLKLKQGGWALFKINRNVRR) the chain is Cytoplasmic. A helical membrane pass occupies residues 258–278 (AVFLGMLLQAMQQFTGMNIIM). At 279 to 297 (YYAPRIFKMAGFTTTEQQM) the chain is on the periplasmic side. Residues 298 to 318 (IATLVVGLTFMFATFIAVFTV) traverse the membrane as a helical segment. Residues 319–325 (DKAGRKP) are Cytoplasmic-facing. The helical transmembrane segment at 326-346 (ALKIGFSVMALGTLVLGYCLM) threads the bilayer. The Periplasmic portion of the chain corresponds to 347 to 361 (QFDNGTASSGLSWLS). The helical transmembrane segment at 362-382 (VGMTMMCIAGYAMSAAPVVWI) threads the bilayer. The Cytoplasmic portion of the chain corresponds to 383–404 (LCSEIQPLKCRDFGITCSTTTN). The next 2 helical transmembrane spans lie at 405–425 (WVSN…IGAA) and 426–446 (GTFW…FWLI). The Cytoplasmic segment spans residues 447-472 (PETKNVTLEHIERKLMAGEKLRNIGV).

The protein belongs to the major facilitator superfamily. Sugar transporter (TC 2.A.1.1) family.

Its subcellular location is the cell inner membrane. It carries out the reaction L-arabinose(in) + H(+)(in) = L-arabinose(out) + H(+)(out). Uptake of L-arabinose across the cytoplasmic membrane with the concomitant transport of protons into the cell (symport system). The polypeptide is Arabinose-proton symporter (araE) (Escherichia coli O157:H7).